Here is a 486-residue protein sequence, read N- to C-terminus: 23S rRNA (uracil(1939)-C(5))-methyltransferase RlmD (486 aa).

Residues 14 to 76 (AAQDGSGLPE…NHWEQANLTA (63 aa)) form the TRAM domain. Cysteine 89, cysteine 99, cysteine 102, and cysteine 181 together coordinate [4Fe-4S] cluster. Residues glutamine 289, phenylalanine 318, asparagine 323, glutamate 339, asparagine 374, and aspartate 395 each contribute to the S-adenosyl-L-methionine site. Cysteine 442 (nucleophile) is an active-site residue.

The protein belongs to the class I-like SAM-binding methyltransferase superfamily. RNA M5U methyltransferase family. RlmD subfamily.

It carries out the reaction uridine(1939) in 23S rRNA + S-adenosyl-L-methionine = 5-methyluridine(1939) in 23S rRNA + S-adenosyl-L-homocysteine + H(+). Functionally, catalyzes the formation of 5-methyl-uridine at position 1939 (m5U1939) in 23S rRNA. The polypeptide is 23S rRNA (uracil(1939)-C(5))-methyltransferase RlmD (Verminephrobacter eiseniae (strain EF01-2)).